The sequence spans 1057 residues: Carbamoyl phosphate synthase large chain (1057 aa).

Positions 1-401 (MPKRNDIKTI…SLLKAIRSLE (401 aa)) are carboxyphosphate synthetic domain. Positions 129, 169, 175, 176, 208, 210, 215, 241, 242, 243, 284, and 298 each coordinate ATP. Positions 133 to 327 (RTLMNYLNVP…IAKLAAKIAV (195 aa)) constitute an ATP-grasp 1 domain. Residues Gln-284, Glu-298, and Asn-300 each coordinate Mg(2+). Positions 284, 298, and 300 each coordinate Mn(2+). An oligomerization domain region spans residues 402-546 (YGVHHLGLPN…YGTYETENES (145 aa)). Positions 547–929 (IITDKEKILV…ALFKGLTGSG (383 aa)) are carbamoyl phosphate synthetic domain. The region spanning 671–861 (EALLRKINVP…MAQLAMRAII (191 aa)) is the ATP-grasp 2 domain. Arg-707, Arg-746, Leu-748, Glu-752, Gly-777, Val-778, His-779, Ser-780, Gln-820, and Glu-832 together coordinate ATP. Mg(2+)-binding residues include Gln-820, Glu-832, and Asn-834. 3 residues coordinate Mn(2+): Gln-820, Glu-832, and Asn-834. The MGS-like domain occupies 930–1057 (VEVKDHGTVL…ESMTFTMRQM (128 aa)). Residues 930 to 1057 (VEVKDHGTVL…ESMTFTMRQM (128 aa)) are allosteric domain.

Belongs to the CarB family. In terms of assembly, composed of two chains; the small (or glutamine) chain promotes the hydrolysis of glutamine to ammonia, which is used by the large (or ammonia) chain to synthesize carbamoyl phosphate. Tetramer of heterodimers (alpha,beta)4. Mg(2+) serves as cofactor. The cofactor is Mn(2+).

The catalysed reaction is hydrogencarbonate + L-glutamine + 2 ATP + H2O = carbamoyl phosphate + L-glutamate + 2 ADP + phosphate + 2 H(+). It catalyses the reaction hydrogencarbonate + NH4(+) + 2 ATP = carbamoyl phosphate + 2 ADP + phosphate + 2 H(+). It functions in the pathway amino-acid biosynthesis; L-arginine biosynthesis; carbamoyl phosphate from bicarbonate: step 1/1. The protein operates within pyrimidine metabolism; UMP biosynthesis via de novo pathway; (S)-dihydroorotate from bicarbonate: step 1/3. Large subunit of the glutamine-dependent carbamoyl phosphate synthetase (CPSase). CPSase catalyzes the formation of carbamoyl phosphate from the ammonia moiety of glutamine, carbonate, and phosphate donated by ATP, constituting the first step of 2 biosynthetic pathways, one leading to arginine and/or urea and the other to pyrimidine nucleotides. The large subunit (synthetase) binds the substrates ammonia (free or transferred from glutamine from the small subunit), hydrogencarbonate and ATP and carries out an ATP-coupled ligase reaction, activating hydrogencarbonate by forming carboxy phosphate which reacts with ammonia to form carbamoyl phosphate. The sequence is that of Carbamoyl phosphate synthase large chain from Staphylococcus aureus (strain bovine RF122 / ET3-1).